The primary structure comprises 163 residues: MNVYEGSLVATGLKVGLVVARFNSLVTEQLLVGAADALRRHGVKDGDIDVFRCPGTFELPALLRRVARSARYDAVVALGAVIRGGTPHFEYVAGEATKGVAQIALESDCAVSMGILTCDTLEQALERAGVKAGNKGAEAAVAAVEQANVLREAAKVPSPRRAE.

5-amino-6-(D-ribitylamino)uracil contacts are provided by residues Phe22, 56–58, and 80–82; these read TFE and AVI. Residue 85–86 participates in (2S)-2-hydroxy-3-oxobutyl phosphate binding; it reads GT. Residue His88 is the Proton donor of the active site. Residue Met113 coordinates 5-amino-6-(D-ribitylamino)uracil. Arg127 lines the (2S)-2-hydroxy-3-oxobutyl phosphate pocket.

This sequence belongs to the DMRL synthase family.

The enzyme catalyses (2S)-2-hydroxy-3-oxobutyl phosphate + 5-amino-6-(D-ribitylamino)uracil = 6,7-dimethyl-8-(1-D-ribityl)lumazine + phosphate + 2 H2O + H(+). It participates in cofactor biosynthesis; riboflavin biosynthesis; riboflavin from 2-hydroxy-3-oxobutyl phosphate and 5-amino-6-(D-ribitylamino)uracil: step 1/2. Catalyzes the formation of 6,7-dimethyl-8-ribityllumazine by condensation of 5-amino-6-(D-ribitylamino)uracil with 3,4-dihydroxy-2-butanone 4-phosphate. This is the penultimate step in the biosynthesis of riboflavin. This Anaeromyxobacter sp. (strain Fw109-5) protein is 6,7-dimethyl-8-ribityllumazine synthase.